The following is a 417-amino-acid chain: Imidazolonepropionase (417 aa).

Positions 77 and 79 each coordinate Fe(3+). Residues histidine 77 and histidine 79 each coordinate Zn(2+). Arginine 86, tyrosine 149, and histidine 182 together coordinate 4-imidazolone-5-propanoate. Tyrosine 149 is a binding site for N-formimidoyl-L-glutamate. A Fe(3+)-binding site is contributed by histidine 247. Residue histidine 247 coordinates Zn(2+). Residue glutamine 250 coordinates 4-imidazolone-5-propanoate. Aspartate 322 serves as a coordination point for Fe(3+). Aspartate 322 is a binding site for Zn(2+). 2 residues coordinate N-formimidoyl-L-glutamate: asparagine 324 and glycine 326. Threonine 327 is a binding site for 4-imidazolone-5-propanoate.

Belongs to the metallo-dependent hydrolases superfamily. HutI family. The cofactor is Zn(2+). Fe(3+) serves as cofactor.

Its subcellular location is the cytoplasm. It catalyses the reaction 4-imidazolone-5-propanoate + H2O = N-formimidoyl-L-glutamate. The protein operates within amino-acid degradation; L-histidine degradation into L-glutamate; N-formimidoyl-L-glutamate from L-histidine: step 3/3. Catalyzes the hydrolytic cleavage of the carbon-nitrogen bond in imidazolone-5-propanoate to yield N-formimidoyl-L-glutamate. It is the third step in the universal histidine degradation pathway. This is Imidazolonepropionase from Cupriavidus necator (strain ATCC 17699 / DSM 428 / KCTC 22496 / NCIMB 10442 / H16 / Stanier 337) (Ralstonia eutropha).